We begin with the raw amino-acid sequence, 151 residues long: Large ribosomal subunit protein bL9 (151 aa).

It belongs to the bacterial ribosomal protein bL9 family.

Binds to the 23S rRNA. This chain is Large ribosomal subunit protein bL9, found in Bordetella pertussis (strain Tohama I / ATCC BAA-589 / NCTC 13251).